We begin with the raw amino-acid sequence, 404 residues long: Pectate lyase E (404 aa).

An N-terminal signal peptide occupies residues 1–41; it reads MNNSRMSSVSTQKTTGRSALGTKSALAAIIATTMMVSVASA. Positions 182 and 225 each coordinate Ca(2+). Arg278 is an active-site residue.

The protein belongs to the polysaccharide lyase 1 family. PLBC subfamily. Ca(2+) serves as cofactor.

Its subcellular location is the secreted. The enzyme catalyses Eliminative cleavage of (1-&gt;4)-alpha-D-galacturonan to give oligosaccharides with 4-deoxy-alpha-D-galact-4-enuronosyl groups at their non-reducing ends.. The protein operates within glycan metabolism; pectin degradation; 2-dehydro-3-deoxy-D-gluconate from pectin: step 2/5. Involved in maceration and soft-rotting of plant tissue. Pectate lyases have been implicated as pathogenicity factors which induce maceration or rotting of plant tissue. PelE is sufficient to induce these effects under laboratory conditions. The sequence is that of Pectate lyase E (pelE) from Dickeya dadantii (strain 3937) (Erwinia chrysanthemi (strain 3937)).